Consider the following 148-residue polypeptide: MASKRILKELKDLQKDPPTSCSAGPVAEDMFHWQATIMGPSESPYAGGVFLVTIHFPPDYPFKPPKVAFRTKVFHPNINSNGSICLDILKEQWSPALTISKVLLSICSLLTDPNPDDPLVPEIAHMYKTDKNKYESTARSWTQKYAMG.

The region spanning 1 to 147 is the UBC core domain; it reads MASKRILKEL…ARSWTQKYAM (147 aa). The Glycyl thioester intermediate role is filled by C85.

The protein belongs to the ubiquitin-conjugating enzyme family. As to quaternary structure, interacts with CHIP and the E3 ubiquitin ligase BB. Associates with the E3 ubiquitin ligase JMJ24. As to expression, ubiquitously expressed with the highest levels in rosette leaves, roots and petals.

The catalysed reaction is S-ubiquitinyl-[E1 ubiquitin-activating enzyme]-L-cysteine + [E2 ubiquitin-conjugating enzyme]-L-cysteine = [E1 ubiquitin-activating enzyme]-L-cysteine + S-ubiquitinyl-[E2 ubiquitin-conjugating enzyme]-L-cysteine.. It participates in protein modification; protein ubiquitination. Its function is as follows. Accepts the ubiquitin from the E1 complex and catalyzes its covalent attachment to other proteins. Mediates the selective degradation of short-lived and abnormal proteins. This Arabidopsis thaliana (Mouse-ear cress) protein is Ubiquitin-conjugating enzyme E2 10.